The primary structure comprises 388 residues: MTRSVWLKADSEVGDWETRKRRITAGIEAGVDWVLVDEEDVDRVSELGEINIAAFTNGDVHVMEAEAEDSEADATIVGKDGEGDGTVDLPSDFSGSADLSTLRQNGAAPDGGYVRIFDEDYEAFAEAVAAEADFTIVIGENWQIIPLENLIARVGEETDLIAGVRTAEDARTAYETLELGADGVLLDTDEVDEIRKTVEVRDEMGRESLDLEYAEVTAIEQTGSADRVCIDTGSLMEHDEGMLVGSMARGLFFVHAETAESPYVASRPFRVNAGAVHAYVRTPDGGTKYLSELQSGDEVQIVDANGRTREAIVGRAKIEKRPMFRVQAETEDSDRIETLLQNAETIKVHTQDGRTAVTDLEPGDEILIHHEDTATHFGERIEESIIEK.

This sequence belongs to the archaeal-type DHQ synthase family.

It catalyses the reaction 2-amino-2,3,7-trideoxy-D-lyxo-hept-6-ulosonate + NAD(+) + H2O = 3-dehydroquinate + NH4(+) + NADH + H(+). Catalyzes the oxidative deamination and cyclization of 2-amino-3,7-dideoxy-D-threo-hept-6-ulosonic acid (ADH) to yield 3-dehydroquinate (DHQ), which is fed into the canonical shikimic pathway of aromatic amino acid biosynthesis. The sequence is that of 3-dehydroquinate synthase from Haloarcula marismortui (strain ATCC 43049 / DSM 3752 / JCM 8966 / VKM B-1809) (Halobacterium marismortui).